We begin with the raw amino-acid sequence, 447 residues long: MTTILKHLPVGQRIGIAFSGGLDTSAALLWMRQKGAVPYAYTANLGQPDEEDYDAIPRRAMEYGAENARLIDCRKQLVAEGIAAIQCGAFHNTTGGLTYFNTTPLGRAVTGTMLVAAMKEDGVNIWGDGSTYKGNDIERFYRYGLLTNAELQIYKPWLDTDFIDELGGRHEMSEFMIACGFDYKMSVEKAYSTDSNMLGATHEAKDLEYLNSSVKIVNPIMGVKFWDESVKIPAEEVTVRFEQGHPVALNGKTFSDDVEMMLEANRIGGRHGLGMSDQIENRIIEAKSRGIYEAPGMALLHIAYERLLTGIHNEDTIEQYHAHGRQLGRLLYQGRWFDSQALMLRDSLQRWVASQITGEVTLELRRGNDYSILNTVSENLTYKPERLTMEKGDSVFSPDDRIGQLTMRNLDITDTREKLFGYAKTGLLSSSAASGVPQVENLENKGQ.

ATP-binding positions include 17 to 25 and Ala43; that span reads AFSGGLDTS. An L-citrulline-binding site is contributed by Tyr99. Positions 129 and 131 each coordinate ATP. L-aspartate contacts are provided by Thr131, Asn135, and Asp136. Asn135 contributes to the L-citrulline binding site. Residue Asp136 coordinates ATP. Positions 139 and 192 each coordinate L-citrulline. ATP is bound at residue Asp194. The L-citrulline site is built by Thr201, Glu203, and Glu280.

The protein belongs to the argininosuccinate synthase family. Type 2 subfamily. In terms of assembly, homotetramer.

Its subcellular location is the cytoplasm. It catalyses the reaction L-citrulline + L-aspartate + ATP = 2-(N(omega)-L-arginino)succinate + AMP + diphosphate + H(+). It participates in amino-acid biosynthesis; L-arginine biosynthesis; L-arginine from L-ornithine and carbamoyl phosphate: step 2/3. The sequence is that of Argininosuccinate synthase from Escherichia coli (strain K12 / MC4100 / BW2952).